The chain runs to 335 residues: Zinc transporter ZIP11 (335 aa).

Transmembrane regions (helical) follow at residues L12–F32, L44–V64, G72–V92, I187–V207, F256–V278, V283–M300, and L315–G335.

This sequence belongs to the ZIP transporter (TC 2.A.5) family.

Its subcellular location is the cell membrane. The protein resides in the nucleus. It is found in the cytoplasm. The protein localises to the golgi apparatus. The enzyme catalyses Zn(2+)(in) = Zn(2+)(out). It catalyses the reaction Cu(2+)(in) = Cu(2+)(out). Zinc importer that regulates cytosolic zinc concentrations either via zinc influx from the extracellular compartment or efflux from intracellular organelles such as Golgi apparatus. May transport copper ions as well. The transport mechanism remains to be elucidated. In Rattus norvegicus (Rat), this protein is Zinc transporter ZIP11 (Slc39a11).